Consider the following 390-residue polypeptide: Peroxisomal sarcosine oxidase (390 aa).

An FAD-binding site is contributed by 9-39 (DAIVIGAGIQGCFTAYHLAKHSKSVLLLEQF). K126 and K287 each carry N6-acetyllysine. S-8alpha-FAD cysteine is present on C319. A Microbody targeting signal motif is present at residues 388 to 390 (AHL).

Belongs to the MSOX/MTOX family. FAD is required as a cofactor. Kidney and liver.

Its subcellular location is the peroxisome. It catalyses the reaction sarcosine + O2 + H2O = formaldehyde + glycine + H2O2. The enzyme catalyses L-pipecolate + O2 = L-1-piperideine-6-carboxylate + H2O2 + H(+). In terms of biological role, metabolizes sarcosine, L-pipecolic acid and L-proline. In Mus musculus (Mouse), this protein is Peroxisomal sarcosine oxidase (Pipox).